The chain runs to 172 residues: Bifunctional protein PyrR (172 aa).

Substrate-binding positions include 36–37 (TG), R77, 94–102 (DDVLMSGRT), and V151. A PRPP-binding motif is present at residues 90-102 (LVLVDDVLMSGRT).

The protein belongs to the purine/pyrimidine phosphoribosyltransferase family. PyrR subfamily.

It carries out the reaction UMP + diphosphate = 5-phospho-alpha-D-ribose 1-diphosphate + uracil. Regulates the transcription of the pyrimidine nucleotide (pyr) operon in response to exogenous pyrimidines. Its function is as follows. Also displays a weak uracil phosphoribosyltransferase activity which is not physiologically significant. In Pseudomonas putida (Arthrobacter siderocapsulatus), this protein is Bifunctional protein PyrR.